The chain runs to 270 residues: Urease accessory protein UreD (270 aa).

This sequence belongs to the UreD family. As to quaternary structure, ureD, UreF and UreG form a complex that acts as a GTP-hydrolysis-dependent molecular chaperone, activating the urease apoprotein by helping to assemble the nickel containing metallocenter of UreC. The complex may form in the order UreABCD, UreABCDF, UreABCDFG. The UreE protein probably delivers the nickel in a GTPase-dependent fashion.

It is found in the cytoplasm. In terms of biological role, necessary for the functional incorporation of the urease nickel metallocenter. The polypeptide is Urease accessory protein UreD (Klebsiella aerogenes (Enterobacter aerogenes)).